Reading from the N-terminus, the 236-residue chain is Carbonyl reductase family member 4 (236 aa).

NADP(+)-binding positions include 11–14 (SRGI), 34–35 (RN), Asp55, and 82–84 (SAG). Ser134 is a binding site for substrate. Residues Tyr147, Lys151, and 180 to 182 (IRT) each bind NADP(+). Tyr147 serves as the catalytic Proton acceptor.

Belongs to the short-chain dehydrogenases/reductases (SDR) family. Homotetramer (in vitro). Heterotetramer with HSD17B8; contains two molecules each of HSD17B8 and CBR4.

It is found in the mitochondrion matrix. It participates in lipid metabolism; fatty acid biosynthesis. Its function is as follows. The heterotetramer with HSD17B8 has NADH-dependent 3-ketoacyl-acyl carrier protein reductase activity, and thereby plays a role in mitochondrial fatty acid biosynthesis. Within the heterotetramer, HSD17B8 binds NADH; CBR4 binds NADPD. The homotetramer has NADPH-dependent quinone reductase activity. Both homotetramer and the heterotetramer have broad in vitro substrate specificity and can reduce 9,10-phenanthrenequinone, 1,4-benzoquinone and various other o-quinones and p-quinones. This is Carbonyl reductase family member 4 (cbr4) from Xenopus laevis (African clawed frog).